Consider the following 329-residue polypeptide: MQHLNELVEKAKLAIESIQDKSLTALDEIRVEYFGKKGYFTQLMQELRNVSAEERPAMGAKINEAKQAALEFLNAKKTEWEQAELNAKLEKERVDVSLPGRKVETGGLHPVTMTINRVTKFFSELGFSVENGPEIESDYYNFDALNIPKHHPARADHDTFWFNPELLLRTQTSGVQIRTMEKMQPPIRIMAPGRVYRNDYDQTHTPMFHQIELLYVDKKANFTELKGLLHDFLRAFFEEDLQVRFRPSYFPFTEPSAEVDVMGKNGKWLEVLGCGMVHPNVLRNVGIDPNEYSGFAVGMGVERLTMLRYNVTDLRSFFENDLRFLKQFK.

Residue glutamate 254 coordinates Mg(2+).

The protein belongs to the class-II aminoacyl-tRNA synthetase family. Phe-tRNA synthetase alpha subunit type 1 subfamily. In terms of assembly, tetramer of two alpha and two beta subunits. Requires Mg(2+) as cofactor.

It is found in the cytoplasm. It catalyses the reaction tRNA(Phe) + L-phenylalanine + ATP = L-phenylalanyl-tRNA(Phe) + AMP + diphosphate + H(+). This is Phenylalanine--tRNA ligase alpha subunit from Haemophilus influenzae (strain 86-028NP).